A 225-amino-acid chain; its full sequence is Orotidine 5'-phosphate decarboxylase (225 aa).

Substrate contacts are provided by residues Asp-9, Lys-31, 58 to 67 (DLKLHDIPNT), Thr-115, Arg-176, Gln-184, Gly-204, and Arg-205. The active-site Proton donor is the Lys-60.

Belongs to the OMP decarboxylase family. Type 1 subfamily. In terms of assembly, homodimer.

It carries out the reaction orotidine 5'-phosphate + H(+) = UMP + CO2. Its pathway is pyrimidine metabolism; UMP biosynthesis via de novo pathway; UMP from orotate: step 2/2. In terms of biological role, catalyzes the decarboxylation of orotidine 5'-monophosphate (OMP) to uridine 5'-monophosphate (UMP). The chain is Orotidine 5'-phosphate decarboxylase from Wolbachia sp. subsp. Brugia malayi (strain TRS).